Here is a 485-residue protein sequence, read N- to C-terminus: UDP-N-acetylmuramate--L-alanine ligase (485 aa).

129 to 135 (GTHGKTT) is a binding site for ATP.

This sequence belongs to the MurCDEF family.

Its subcellular location is the cytoplasm. The catalysed reaction is UDP-N-acetyl-alpha-D-muramate + L-alanine + ATP = UDP-N-acetyl-alpha-D-muramoyl-L-alanine + ADP + phosphate + H(+). It functions in the pathway cell wall biogenesis; peptidoglycan biosynthesis. Functionally, cell wall formation. The chain is UDP-N-acetylmuramate--L-alanine ligase from Vibrio parahaemolyticus serotype O3:K6 (strain RIMD 2210633).